A 113-amino-acid polypeptide reads, in one-letter code: MKGLNYMLCIPHTSVSRSMLEAQCRRLINNIPGWELIRVENMMRLRCTFTFPDFREALAFTNSVGELAEAEQHHPELITEWGKVTVTWWTHSVKGVHMNDFIMAARTGVVANI.

It belongs to the pterin-4-alpha-carbinolamine dehydratase family.

It catalyses the reaction (4aS,6R)-4a-hydroxy-L-erythro-5,6,7,8-tetrahydrobiopterin = (6R)-L-erythro-6,7-dihydrobiopterin + H2O. This Pelodictyon phaeoclathratiforme (strain DSM 5477 / BU-1) protein is Putative pterin-4-alpha-carbinolamine dehydratase.